We begin with the raw amino-acid sequence, 193 residues long: AP-3 complex subunit sigma-2 (193 aa).

The protein belongs to the adaptor complexes small subunit family. As to quaternary structure, adaptor protein complex 3 (AP-3) is a heterotetramer composed of two large adaptins (delta-type subunit AP3D1 and beta-type subunit AP3B1 or AP3B2), a medium adaptin (mu-type subunit AP3M1 or AP3M2) and a small adaptin (sigma-type subunit APS1 or AP3S2). Interacts with AGAP1. AP-3 associates with the BLOC-1 complex.

It is found in the golgi apparatus. The protein localises to the cytoplasmic vesicle membrane. In terms of biological role, part of the AP-3 complex, an adaptor-related complex which is not clathrin-associated. The complex is associated with the Golgi region as well as more peripheral structures. It facilitates the budding of vesicles from the Golgi membrane and may be directly involved in trafficking to lysosomes. In concert with the BLOC-1 complex, AP-3 is required to target cargos into vesicles assembled at cell bodies for delivery into neurites and nerve terminals. This chain is AP-3 complex subunit sigma-2 (AP3S2), found in Bos taurus (Bovine).